Consider the following 691-residue polypeptide: Elongation factor G (691 aa).

The 275-residue stretch at 8-282 (ERVRNIGIAA…AVVNYLPAPV (275 aa)) folds into the tr-type G domain. GTP contacts are provided by residues 17 to 24 (AHIDAGKT), 81 to 85 (DTPGH), and 135 to 138 (NKMD).

The protein belongs to the TRAFAC class translation factor GTPase superfamily. Classic translation factor GTPase family. EF-G/EF-2 subfamily.

The protein localises to the cytoplasm. In terms of biological role, catalyzes the GTP-dependent ribosomal translocation step during translation elongation. During this step, the ribosome changes from the pre-translocational (PRE) to the post-translocational (POST) state as the newly formed A-site-bound peptidyl-tRNA and P-site-bound deacylated tRNA move to the P and E sites, respectively. Catalyzes the coordinated movement of the two tRNA molecules, the mRNA and conformational changes in the ribosome. The protein is Elongation factor G of Prochlorococcus marinus (strain NATL2A).